Consider the following 158-residue polypeptide: D-aminoacyl-tRNA deacylase (158 aa).

A Gly-cisPro motif, important for rejection of L-amino acids motif is present at residues 143–144 (GP).

This sequence belongs to the DTD family. As to quaternary structure, homodimer.

The protein localises to the cytoplasm. The enzyme catalyses glycyl-tRNA(Ala) + H2O = tRNA(Ala) + glycine + H(+). The catalysed reaction is a D-aminoacyl-tRNA + H2O = a tRNA + a D-alpha-amino acid + H(+). In terms of biological role, an aminoacyl-tRNA editing enzyme that deacylates mischarged D-aminoacyl-tRNAs. Also deacylates mischarged glycyl-tRNA(Ala), protecting cells against glycine mischarging by AlaRS. Acts via tRNA-based rather than protein-based catalysis; rejects L-amino acids rather than detecting D-amino acids in the active site. By recycling D-aminoacyl-tRNA to D-amino acids and free tRNA molecules, this enzyme counteracts the toxicity associated with the formation of D-aminoacyl-tRNA entities in vivo and helps enforce protein L-homochirality. This chain is D-aminoacyl-tRNA deacylase, found in Solidesulfovibrio magneticus (strain ATCC 700980 / DSM 13731 / RS-1) (Desulfovibrio magneticus).